Consider the following 644-residue polypeptide: 1-deoxy-D-xylulose-5-phosphate synthase (644 aa).

Thiamine diphosphate is bound by residues His-72 and 113–115 (GHA). A Mg(2+)-binding site is contributed by Asp-144. Residues 145–146 (GA), Asn-174, Tyr-287, and Glu-370 each bind thiamine diphosphate. Asn-174 contacts Mg(2+).

The protein belongs to the transketolase family. DXPS subfamily. As to quaternary structure, homodimer. Requires Mg(2+) as cofactor. The cofactor is thiamine diphosphate.

The catalysed reaction is D-glyceraldehyde 3-phosphate + pyruvate + H(+) = 1-deoxy-D-xylulose 5-phosphate + CO2. Its pathway is metabolic intermediate biosynthesis; 1-deoxy-D-xylulose 5-phosphate biosynthesis; 1-deoxy-D-xylulose 5-phosphate from D-glyceraldehyde 3-phosphate and pyruvate: step 1/1. Its function is as follows. Catalyzes the acyloin condensation reaction between C atoms 2 and 3 of pyruvate and glyceraldehyde 3-phosphate to yield 1-deoxy-D-xylulose-5-phosphate (DXP). This chain is 1-deoxy-D-xylulose-5-phosphate synthase, found in Prochlorococcus marinus (strain MIT 9313).